Consider the following 178-residue polypeptide: Ribosomal RNA small subunit methyltransferase G (178 aa).

Residues Gly54, Leu59, 105–106 (LE), and Arg120 each bind S-adenosyl-L-methionine.

Belongs to the methyltransferase superfamily. RNA methyltransferase RsmG family.

The protein resides in the cytoplasm. The catalysed reaction is guanosine(527) in 16S rRNA + S-adenosyl-L-methionine = N(7)-methylguanosine(527) in 16S rRNA + S-adenosyl-L-homocysteine. Its function is as follows. Specifically methylates the N7 position of guanine in position 527 of 16S rRNA. The protein is Ribosomal RNA small subunit methyltransferase G of Helicobacter acinonychis (strain Sheeba).